Consider the following 199-residue polypeptide: Recombination protein RecR (199 aa).

Residues Cys57–Cys72 form a C4-type zinc finger. The Toprim domain maps to Thr80 to Pro176.

The protein belongs to the RecR family.

In terms of biological role, may play a role in DNA repair. It seems to be involved in an RecBC-independent recombinational process of DNA repair. It may act with RecF and RecO. In Exiguobacterium sp. (strain ATCC BAA-1283 / AT1b), this protein is Recombination protein RecR.